The following is a 400-amino-acid chain: Subtilisin-like protease 7 (400 aa).

The signal sequence occupies residues 1–20 (MGFITKAIPLALAAMSVVNG). Residues 21 to 119 (AEILETRAGV…IERDARVQIN (99 aa)) constitute a propeptide that is removed on maturation. The Inhibitor I9 domain maps to 36-118 (KYIVIMNDGV…YIERDARVQI (83 aa)). A Peptidase S8 domain is found at 129 to 400 (SWGLARVGSR…GKLINNGSGK (272 aa)). Active-site charge relay system residues include Asp161 and His192. N-linked (GlcNAc...) asparagine glycosylation is found at Asn222 and Asn252. Ser346 functions as the Charge relay system in the catalytic mechanism. The N-linked (GlcNAc...) asparagine glycan is linked to Asn396.

It belongs to the peptidase S8 family.

It localises to the secreted. Functionally, secreted subtilisin-like serine protease with keratinolytic activity that contributes to pathogenicity. This is Subtilisin-like protease 7 (SUB7) from Arthroderma otae (strain ATCC MYA-4605 / CBS 113480) (Microsporum canis).